The sequence spans 295 residues: Protease HtpX homolog (295 aa).

2 helical membrane-spanning segments follow: residues I6 to V26 and L40 to L60. H148 lines the Zn(2+) pocket. E149 is an active-site residue. A Zn(2+)-binding site is contributed by H152. Transmembrane regions (helical) follow at residues L163–L183 and I198–F218. E223 is a binding site for Zn(2+).

The protein belongs to the peptidase M48B family. Zn(2+) serves as cofactor.

The protein localises to the cell inner membrane. The sequence is that of Protease HtpX homolog from Leptospira borgpetersenii serovar Hardjo-bovis (strain JB197).